A 427-amino-acid polypeptide reads, in one-letter code: Glutamate-1-semialdehyde 2,1-aminomutase (427 aa).

N6-(pyridoxal phosphate)lysine is present on K264.

This sequence belongs to the class-III pyridoxal-phosphate-dependent aminotransferase family. HemL subfamily. As to quaternary structure, homodimer. Pyridoxal 5'-phosphate is required as a cofactor.

It localises to the cytoplasm. The enzyme catalyses (S)-4-amino-5-oxopentanoate = 5-aminolevulinate. It participates in porphyrin-containing compound metabolism; protoporphyrin-IX biosynthesis; 5-aminolevulinate from L-glutamyl-tRNA(Glu): step 2/2. This chain is Glutamate-1-semialdehyde 2,1-aminomutase, found in Clostridium botulinum (strain Alaska E43 / Type E3).